The sequence spans 356 residues: Glutamine synthetase PR-2 (356 aa).

The 81-residue stretch at 19-99 folds into the GS beta-grasp domain; sequence IIAEYIWVGG…VICDVYTPAG (81 aa). The disordered stretch occupies residues 37–66; sequence ARTLPGPVDDPAKLPKWNYDGSSTDQAPGD. In terms of domain architecture, GS catalytic spans 106 to 356; that stretch reads KRYDAAKIFS…IAETTILWKP (251 aa).

This sequence belongs to the glutamine synthetase family. As to quaternary structure, homooctamer. In terms of tissue distribution, roots.

The protein localises to the cytoplasm. The enzyme catalyses L-glutamate + NH4(+) + ATP = L-glutamine + ADP + phosphate + H(+). This is Glutamine synthetase PR-2 from Phaseolus vulgaris (Kidney bean).